A 41-amino-acid chain; its full sequence is Large ribosomal subunit protein bL36 (41 aa).

It belongs to the bacterial ribosomal protein bL36 family.

This Bartonella tribocorum (strain CIP 105476 / IBS 506) protein is Large ribosomal subunit protein bL36.